A 394-amino-acid polypeptide reads, in one-letter code: MNDSPGRTTVSGPSGGSDPFRVMVVDDSAVIRGLITRALESDPEIKVVASVANGQMAINTLSRQPIDVIVLDIEMPVLDGLSALPHLLQADPNVKIVMASTLTAKGADISLRALRAGAADYIPKPSSTRELTGADTFKRELTEKVKALGAAARRSGPRREGTAAARPPGAAAQPTSGYTLPSPVRAKPETGPLTVRPLPPDGRPDVIAIGSSTGGPQALFEVLGHLRGATQPILITQHMPATFTTILADHITRQCGIQCAEAKDGEPIVGGRAYVAPGDFHFLVVNRNGVPTVQLTKDAPENFCRPAVDPMLRSIVRQWGRRVLSVILTGMGHDGQKGCESVVQAGGVVIGQDEATSVVWGMPGAVATAGLCSAILPLKEIGPFIQKIAARRAA.

The region spanning 21–139 is the Response regulatory domain; that stretch reads RVMVVDDSAV…ELTGADTFKR (119 aa). 4-aspartylphosphate is present on Asp72. The interval 148–201 is disordered; sequence LGAAARRSGPRREGTAAARPPGAAAQPTSGYTLPSPVRAKPETGPLTVRPLPPD. Residues 162 to 172 are compositionally biased toward low complexity; it reads TAAARPPGAAA. A CheB-type methylesterase domain is found at 200–382; it reads PDGRPDVIAI…SAILPLKEIG (183 aa). Active-site residues include Ser212, His238, and Asp334.

The protein belongs to the CheB family. In terms of processing, phosphorylated by CheA. Phosphorylation of the N-terminal regulatory domain activates the methylesterase activity.

The protein localises to the cytoplasm. The catalysed reaction is [protein]-L-glutamate 5-O-methyl ester + H2O = L-glutamyl-[protein] + methanol + H(+). It catalyses the reaction L-glutaminyl-[protein] + H2O = L-glutamyl-[protein] + NH4(+). Its function is as follows. Involved in chemotaxis. Part of a chemotaxis signal transduction system that modulates chemotaxis in response to various stimuli. Catalyzes the demethylation of specific methylglutamate residues introduced into the chemoreceptors (methyl-accepting chemotaxis proteins or MCP) by CheR. Also mediates the irreversible deamidation of specific glutamine residues to glutamic acid. In Rhodospirillum centenum (strain ATCC 51521 / SW), this protein is Protein-glutamate methylesterase/protein-glutamine glutaminase of group 2 operon.